Consider the following 463-residue polypeptide: tRNA-2-methylthio-N(6)-dimethylallyladenosine synthase (463 aa).

The MTTase N-terminal domain occupies Arg19–Leu135. Positions 28, 64, 98, 170, 174, and 177 each coordinate [4Fe-4S] cluster. The Radical SAM core domain maps to Arg156–Asn393. The TRAM domain occupies Gln396 to Cys463.

The protein belongs to the methylthiotransferase family. MiaB subfamily. Monomer. It depends on [4Fe-4S] cluster as a cofactor.

The protein resides in the cytoplasm. It carries out the reaction N(6)-dimethylallyladenosine(37) in tRNA + (sulfur carrier)-SH + AH2 + 2 S-adenosyl-L-methionine = 2-methylsulfanyl-N(6)-dimethylallyladenosine(37) in tRNA + (sulfur carrier)-H + 5'-deoxyadenosine + L-methionine + A + S-adenosyl-L-homocysteine + 2 H(+). In terms of biological role, catalyzes the methylthiolation of N6-(dimethylallyl)adenosine (i(6)A), leading to the formation of 2-methylthio-N6-(dimethylallyl)adenosine (ms(2)i(6)A) at position 37 in tRNAs that read codons beginning with uridine. In Prochlorococcus marinus (strain MIT 9312), this protein is tRNA-2-methylthio-N(6)-dimethylallyladenosine synthase.